Here is a 349-residue protein sequence, read N- to C-terminus: Neutral protease 2 homolog ACLA_052720 (349 aa).

The N-terminal stretch at 1–19 (MQLTVLASAILALAQGALA) is a signal peptide. Residues 20–172 (IPAKAPALDV…PAAINLLDRR (153 aa)) constitute a propeptide that is removed on maturation. Disulfide bonds link Cys178–Cys250 and Cys257–Cys275. His300 is a binding site for Zn(2+). Glu301 is a catalytic residue. The Zn(2+) site is built by His304 and Asp315.

This sequence belongs to the peptidase M35 family. It depends on Zn(2+) as a cofactor.

The protein resides in the secreted. The enzyme catalyses Preferential cleavage of bonds with hydrophobic residues in P1'. Also 3-Asn-|-Gln-4 and 8-Gly-|-Ser-9 bonds in insulin B chain.. Functionally, secreted metalloproteinase that allows assimilation of proteinaceous substrates. Shows high activities on basic nuclear substrates such as histone and protamine. The protein is Neutral protease 2 homolog ACLA_052720 of Aspergillus clavatus (strain ATCC 1007 / CBS 513.65 / DSM 816 / NCTC 3887 / NRRL 1 / QM 1276 / 107).